The sequence spans 309 residues: THAP domain-containing protein 7 (309 aa).

Residues 1 to 93 (MPRHCSAAGC…LKEGAVPTIF (93 aa)) form a THAP-type zinc finger. The disordered stretch occupies residues 158 to 209 (TLPASPAGRLEPGLSSPFSDLLGPLGAQADEAGCSAQPSPERQPSPLEPRPV). A Phosphoserine modification is found at Ser162. Pro residues predominate over residues 198 to 209 (ERQPSPLEPRPV). Ser210 bears the Phosphoserine mark. The HCFC1-binding motif (HBM) motif lies at 229–232 (EHSY).

As to quaternary structure, forms homodimers. Interacts with HDAC3 and nuclear hormone receptor corepressors. Interacts via HBM with HCFC1.

The protein resides in the nucleus. It is found in the chromosome. Chromatin-associated, histone tail-binding protein that represses transcription via recruitment of HDAC3 and nuclear hormone receptor corepressors. The chain is THAP domain-containing protein 7 (THAP7) from Homo sapiens (Human).